The chain runs to 199 residues: Recombination protein RecR (199 aa).

A C4-type zinc finger spans residues 58–73; sequence CKKCFNLTSEEECDIC. Residues 81–175 enclose the Toprim domain; it reads NIICVVAETK…KVTRIAYGLP (95 aa).

The protein belongs to the RecR family.

May play a role in DNA repair. It seems to be involved in an RecBC-independent recombinational process of DNA repair. It may act with RecF and RecO. The protein is Recombination protein RecR of Prochlorococcus marinus (strain MIT 9515).